The chain runs to 554 residues: Malate synthase 1 (554 aa).

The Proton acceptor role is filled by Arg177. Asp457 functions as the Proton donor in the catalytic mechanism. Positions Ser552–Leu554 match the SKL peroxisome targeting motif motif.

It belongs to the malate synthase family. In terms of assembly, interacts with PEX9.

The protein resides in the peroxisome matrix. It catalyses the reaction glyoxylate + acetyl-CoA + H2O = (S)-malate + CoA + H(+). Its pathway is carbohydrate metabolism; glyoxylate cycle; (S)-malate from isocitrate: step 2/2. Functionally, malate synthase which takes part in the glyoxylate cycle. MLS1 activity is essential for cells to grow on oleic acid as a sole carbon source. Two steps of the glyoxylate cycle take place in the cytosol, the splitting of isocitrate into succinate and glyoxylate, and the dehydrogenation of malate to oxaloacetate. However, the formation of malate from glyoxylate and acetyl-CoA undertaken MLS1, occurs in the peroxisomes when cells are grown on oleic acid. The source of acetyl-CoA being either peroxisomal when breaking down fatty acids, or cytosolic when extra-cellular two-carbon substrates are used, therefore, although not strictly essential, the peroxisomal localization of MLS1 appears to be advantageous for cells growing on oleic acid, in that acetyl-CoA production and utilization are thereby intimately compartmentalized together to increase efficiency. This Saccharomyces cerevisiae (strain YJM789) (Baker's yeast) protein is Malate synthase 1.